The primary structure comprises 210 residues: MARYRGPVVKLMRREGLNLFLKNSHTLHKEKSSLEKRKYPPGLPPKKKGKITEYGAQLREKQKVKRAYGVLEKQFRRYFEEASHTPGIPGENLLQFLERRLDNVLYRMGFAVTRRQARNFVAHRHILVNGHRVDICSYRVNIGDKIEIREKFQKSAFIEENIKLAQAINRTASWVSVDYAKFSGEVLSLPTRDHIDIPVKEQVIVELYSK.

The tract at residues 30 to 49 (EKSSLEKRKYPPGLPPKKKG) is disordered. The region spanning 99-162 (RRLDNVLYRM…QKSAFIEENI (64 aa)) is the S4 RNA-binding domain.

The protein belongs to the universal ribosomal protein uS4 family. As to quaternary structure, part of the 30S ribosomal subunit. Contacts protein S5. The interaction surface between S4 and S5 is involved in control of translational fidelity.

Functionally, one of the primary rRNA binding proteins, it binds directly to 16S rRNA where it nucleates assembly of the body of the 30S subunit. Its function is as follows. With S5 and S12 plays an important role in translational accuracy. The polypeptide is Small ribosomal subunit protein uS4 (Leptospira biflexa serovar Patoc (strain Patoc 1 / Ames)).